The chain runs to 316 residues: 4-hydroxy-3-methylbut-2-enyl diphosphate reductase (316 aa).

[4Fe-4S] cluster is bound at residue cysteine 12. (2E)-4-hydroxy-3-methylbut-2-enyl diphosphate contacts are provided by histidine 41 and histidine 74. 2 residues coordinate dimethylallyl diphosphate: histidine 41 and histidine 74. Histidine 41 and histidine 74 together coordinate isopentenyl diphosphate. Cysteine 96 lines the [4Fe-4S] cluster pocket. Histidine 124 serves as a coordination point for (2E)-4-hydroxy-3-methylbut-2-enyl diphosphate. Position 124 (histidine 124) interacts with dimethylallyl diphosphate. Histidine 124 is a binding site for isopentenyl diphosphate. The active-site Proton donor is the glutamate 126. Position 169 (threonine 169) interacts with (2E)-4-hydroxy-3-methylbut-2-enyl diphosphate. Cysteine 199 provides a ligand contact to [4Fe-4S] cluster. Residues serine 227, serine 228, asparagine 229, and serine 271 each contribute to the (2E)-4-hydroxy-3-methylbut-2-enyl diphosphate site. Dimethylallyl diphosphate-binding residues include serine 227, serine 228, asparagine 229, and serine 271. Isopentenyl diphosphate is bound by residues serine 227, serine 228, asparagine 229, and serine 271.

The protein belongs to the IspH family. The cofactor is [4Fe-4S] cluster.

The enzyme catalyses isopentenyl diphosphate + 2 oxidized [2Fe-2S]-[ferredoxin] + H2O = (2E)-4-hydroxy-3-methylbut-2-enyl diphosphate + 2 reduced [2Fe-2S]-[ferredoxin] + 2 H(+). It carries out the reaction dimethylallyl diphosphate + 2 oxidized [2Fe-2S]-[ferredoxin] + H2O = (2E)-4-hydroxy-3-methylbut-2-enyl diphosphate + 2 reduced [2Fe-2S]-[ferredoxin] + 2 H(+). It participates in isoprenoid biosynthesis; dimethylallyl diphosphate biosynthesis; dimethylallyl diphosphate from (2E)-4-hydroxy-3-methylbutenyl diphosphate: step 1/1. The protein operates within isoprenoid biosynthesis; isopentenyl diphosphate biosynthesis via DXP pathway; isopentenyl diphosphate from 1-deoxy-D-xylulose 5-phosphate: step 6/6. Functionally, catalyzes the conversion of 1-hydroxy-2-methyl-2-(E)-butenyl 4-diphosphate (HMBPP) into a mixture of isopentenyl diphosphate (IPP) and dimethylallyl diphosphate (DMAPP). Acts in the terminal step of the DOXP/MEP pathway for isoprenoid precursor biosynthesis. The chain is 4-hydroxy-3-methylbut-2-enyl diphosphate reductase from Vibrio cholerae serotype O1 (strain ATCC 39315 / El Tor Inaba N16961).